The sequence spans 132 residues: Iron-sulfur cluster assembly 1 homolog, mitochondrial (132 aa).

A mitochondrion-targeting transit peptide spans 1 to 15; it reads MASSASSVVRATVRA. Positions 60, 124, and 126 each coordinate Fe cation.

The protein belongs to the HesB/IscA family. In terms of assembly, homooligomer, forming a rod-shaped structure 24 nm in length that may arise through a double-helical assembly of subunits. Interacts with CRY4; CRY4 seems to be associated with the outside of the rod-shaped homooligomer. Does not interact with CRY1 or CRY2. As to expression, detected in retina, especially in the retinal ganglion layer, the inner nuclear layer and the outer nuclear layer. Detected in retina visual pigment cells (at protein level).

It localises to the mitochondrion. Its function is as follows. Involved in the maturation of mitochondrial 4Fe-4S proteins functioning late in the iron-sulfur cluster assembly pathway. Probably involved in the binding of an intermediate of Fe/S cluster assembly. Component of a putative magnetoreceptor complex formed by ISCA1 and CRY4, a member of the cryptochrome family that are known to be required for light-dependent magnetosensitivity in various orgnisms. The rod-like assembly may facilitate the perception of the Earth's weak magnetic field. Both ISCA1 and the complex with CRY4 have magnetic properties and are attracted to iron beads. When exposed to a magnetic field of 1 mT (superior to the natural magnetic field), over 50% of the rod-like complexes align more or less in parallel with the magnetic field at room temperature. This Columba livia (Rock dove) protein is Iron-sulfur cluster assembly 1 homolog, mitochondrial (ISCA1).